The chain runs to 720 residues: DNA replication licensing factor mcm7-B (720 aa).

The C4-type zinc finger occupies 183 to 210; the sequence is CDQCGAETYQPIQSPTFMPLIMCPSREC. In terms of domain architecture, MCM spans 331–537; the sequence is FYEKLAASIA…NDLRLAQHIT (207 aa). ATP contacts are provided by Y344, G383, A385, K386, S387, N488, R513, and R603. The short motif at 512-515 is the Arginine finger element; the sequence is SRFD.

It belongs to the MCM family. In terms of assembly, component of the mcm2-7 complex (RLF-M). The complex forms a toroidal hexameric ring with the proposed subunit order mcm2-mcm6-mcm4-mcm7-mcm3-mcm5. The heterodimer of mmcm3/mcm5 interacts with mcm4, mmcm6, mcm7 and weakly with mcm2. The N-terminus is required for interaction with mmcm3, though this interaction may not be direct, and remains in a complex with mmcm3 throughout the cell cycle. Begins to associate with zmcm6 at the neurula stage. Component of the replisome complex. Component of the CMG helicase complex, composed of the mcm2-7 complex, the GINS complex and cdc45. Post-translationally, ubiquitinated by traip when forks converge following formation of DNA interstrand cross-links. Short ubiquitin chains on mcm7 promote recruitment of DNA glycosylase neil3. If the interstrand cross-link cannot be cleaved by neil3, the ubiquitin chains continue to grow on mcm7, promoting the unloading of the CMG helicase complex by the vcp/p97 ATPase.

It is found in the nucleus. The protein localises to the chromosome. The enzyme catalyses ATP + H2O = ADP + phosphate + H(+). Acts as a component of the mcm2-7 complex (mcm complex) which is the putative replicative helicase essential for 'once per cell cycle' DNA replication initiation and elongation in eukaryotic cells. The active ATPase sites in the mcm2-7 ring are formed through the interaction surfaces of two neighboring subunits such that a critical structure of a conserved arginine finger motif is provided in trans relative to the ATP-binding site of the Walker A box of the adjacent subunit. The six ATPase active sites, however, are likely to contribute differentially to the complex helicase activity. The existence of maternal and zygotic forms of mcm3 and mcm6 suggests that specific forms of mcm2-7 complexes may be used during different stages of development. The chain is DNA replication licensing factor mcm7-B (mcm7-b) from Xenopus laevis (African clawed frog).